A 335-amino-acid chain; its full sequence is Biotin synthase (335 aa).

In terms of domain architecture, Radical SAM core spans 47–276 (FYGKKVKLNM…SKEIRISGGR (230 aa)). Cys65, Cys69, and Cys72 together coordinate [4Fe-4S] cluster. Cys109, Cys141, Cys201, and Arg271 together coordinate [2Fe-2S] cluster.

Belongs to the radical SAM superfamily. Biotin synthase family. In terms of assembly, homodimer. [4Fe-4S] cluster is required as a cofactor. It depends on [2Fe-2S] cluster as a cofactor.

It catalyses the reaction (4R,5S)-dethiobiotin + (sulfur carrier)-SH + 2 reduced [2Fe-2S]-[ferredoxin] + 2 S-adenosyl-L-methionine = (sulfur carrier)-H + biotin + 2 5'-deoxyadenosine + 2 L-methionine + 2 oxidized [2Fe-2S]-[ferredoxin]. The protein operates within cofactor biosynthesis; biotin biosynthesis; biotin from 7,8-diaminononanoate: step 2/2. Its function is as follows. Catalyzes the conversion of dethiobiotin (DTB) to biotin by the insertion of a sulfur atom into dethiobiotin via a radical-based mechanism. In Bacillus subtilis (strain 168), this protein is Biotin synthase.